The primary structure comprises 799 residues: LPS-assembly protein LptD (799 aa).

The first 34 residues, 1 to 34 (MMHELDLRPHLARFAQRPLALLAWALLQGTSVNA), serve as a signal peptide directing secretion.

It belongs to the LptD family. As to quaternary structure, component of the lipopolysaccharide transport and assembly complex. Interacts with LptE and LptA.

The protein localises to the cell outer membrane. Functionally, together with LptE, is involved in the assembly of lipopolysaccharide (LPS) at the surface of the outer membrane. The protein is LPS-assembly protein LptD of Albidiferax ferrireducens (strain ATCC BAA-621 / DSM 15236 / T118) (Rhodoferax ferrireducens).